The following is a 280-amino-acid chain: 4-hydroxy-tetrahydrodipicolinate reductase (280 aa).

NAD(+) contacts are provided by residues 14–19 (GAAGRM), D40, 106–108 (ATT), and 130–133 (APSM). H166 acts as the Proton donor/acceptor in catalysis. (S)-2,3,4,5-tetrahydrodipicolinate is bound at residue H167. K170 functions as the Proton donor in the catalytic mechanism. 176–177 (GT) lines the (S)-2,3,4,5-tetrahydrodipicolinate pocket.

The protein belongs to the DapB family.

Its subcellular location is the cytoplasm. It catalyses the reaction (S)-2,3,4,5-tetrahydrodipicolinate + NAD(+) + H2O = (2S,4S)-4-hydroxy-2,3,4,5-tetrahydrodipicolinate + NADH + H(+). It carries out the reaction (S)-2,3,4,5-tetrahydrodipicolinate + NADP(+) + H2O = (2S,4S)-4-hydroxy-2,3,4,5-tetrahydrodipicolinate + NADPH + H(+). It functions in the pathway amino-acid biosynthesis; L-lysine biosynthesis via DAP pathway; (S)-tetrahydrodipicolinate from L-aspartate: step 4/4. Catalyzes the conversion of 4-hydroxy-tetrahydrodipicolinate (HTPA) to tetrahydrodipicolinate. In Rhodopirellula baltica (strain DSM 10527 / NCIMB 13988 / SH1), this protein is 4-hydroxy-tetrahydrodipicolinate reductase.